The chain runs to 165 residues: RxLR effector protein PITG_09218 (165 aa).

A signal peptide spans 1-24; it reads MRFSAFLTLLLVAFVASCSTFASA. A RxLR-dEER motif is present at residues 31-57; sequence RRLRADAAPVPVNKDNVAKLAGGFLEK. Residues 129-149 form a helical membrane-spanning segment; the sequence is VTLGATVAGFAIYGAYKALFD.

It belongs to the RxLR effector family.

Its subcellular location is the secreted. It localises to the host mitochondrion membrane. The protein resides in the host endoplasmic reticulum membrane. In terms of biological role, effector that enhances P.infestans colonization of Nicotiana benthamiana leaves. The chain is RxLR effector protein PITG_09218 from Phytophthora infestans (strain T30-4) (Potato late blight agent).